We begin with the raw amino-acid sequence, 349 residues long: MTEFENLTYLHGKPQGAGLLKANPEDFVVVEDLGFEPDGEGEHILVRILKNGCNTRFVADALAKFLKIHAREVSFAGQKDKHAVTEQWLCARVPGKEMPDLSAFQIEGCKVLEYARHKRKLRLGALKGNAFTLVLREVSHRDDVEARLQAINTRGVPNYFGAQRFGIGGSNLQGALRWAQSNAPVRDRNKRSFWLSAARSALFNQIVNERVKKPDFNQVVDGDALQLAGRGSWFVATQEEQAELQRRVDEKELMITAALPGSGEWGTLRDALAFEEAAIADEGELQSLLLREKVEAARRAMLLYPQQLRWNWWDDVTVELRFWLPAGSFATSVVRELINTMGDYAHIAE.

F27 is a binding site for substrate. The active-site Nucleophile is D80. Residue N129 coordinates substrate. The 149-residue stretch at 155-303 folds into the TRUD domain; the sequence is GVPNYFGAQR…VEAARRAMLL (149 aa). Position 329 (F329) interacts with substrate.

It belongs to the pseudouridine synthase TruD family.

It catalyses the reaction uridine(13) in tRNA = pseudouridine(13) in tRNA. Responsible for synthesis of pseudouridine from uracil-13 in transfer RNAs. This chain is tRNA pseudouridine synthase D, found in Citrobacter koseri (strain ATCC BAA-895 / CDC 4225-83 / SGSC4696).